The primary structure comprises 294 residues: NAD kinase (294 aa).

The active-site Proton acceptor is aspartate 72. NAD(+) is bound by residues 72–73 (DG), 146–147 (ND), arginine 157, arginine 174, aspartate 176, 187–192 (TAYALS), and glutamine 247.

This sequence belongs to the NAD kinase family. The cofactor is a divalent metal cation.

Its subcellular location is the cytoplasm. It catalyses the reaction NAD(+) + ATP = ADP + NADP(+) + H(+). In terms of biological role, involved in the regulation of the intracellular balance of NAD and NADP, and is a key enzyme in the biosynthesis of NADP. Catalyzes specifically the phosphorylation on 2'-hydroxyl of the adenosine moiety of NAD to yield NADP. The sequence is that of NAD kinase from Saccharophagus degradans (strain 2-40 / ATCC 43961 / DSM 17024).